The primary structure comprises 230 residues: MKILLASLCLISLLVILPSVFSASSSSEDFDFFYFVQQWPGSYCDTQKKCCYPNSGKPAADFGIHGLWPNYKDGTYPSNCDASKPFDSSTISDLLTSMKKSWPTLACPSGSGEAFWEHEWEKHGTCSESVIDQHEYFQTALNLKQKTNLLGALTKAGINPDGKSYSLESIRDSIKESIGFTPWVECNRDGSGNSQLYQVYLCVDRSGSGLIECPVFPHGKCGAEIEFPSF.

An N-terminal signal peptide occupies residues 1–22 (MKILLASLCLISLLVILPSVFS). Q38 lines the RNA pocket. The cysteines at positions 44 and 50 are disulfide-linked. Residues H65, F115, 118–119 (HE), and 122–123 (KH) contribute to the RNA site. The Proton donor role is filled by H65. Disulfide bonds link C80/C126, C186/C221, and C202/C213. E119 is a catalytic residue. The active-site Proton acceptor is H123.

Belongs to the RNase T2 family.

The enzyme catalyses a ribonucleotidyl-ribonucleotide-RNA + H2O = a 3'-end 3'-phospho-ribonucleotide-RNA + a 5'-end dephospho-ribonucleoside-RNA + H(+). In terms of biological role, may remobilize phosphate, particularly when cells senesce or when phosphate becomes limiting. This Arabidopsis thaliana (Mouse-ear cress) protein is Ribonuclease 1 (RNS1).